The following is a 475-amino-acid chain: Probable proline--tRNA ligase, mitochondrial (475 aa).

A mitochondrion-targeting transit peptide spans 1-29; sequence MEGLLTRCRTLSALATCSLRHSRCIVRKC.

This sequence belongs to the class-II aminoacyl-tRNA synthetase family.

The protein localises to the mitochondrion matrix. It carries out the reaction tRNA(Pro) + L-proline + ATP = L-prolyl-tRNA(Pro) + AMP + diphosphate. In terms of biological role, mitochondrial aminoacyl-tRNA synthetase that catalyzes the specific attachment of the proline amino acid (aa) to the homologous transfer RNA (tRNA), further participating in protein synthesis. The reaction occurs in a two steps: proline is first activated by ATP to form Pro-AMP and then transferred to the acceptor end of tRNA(Pro). The protein is Probable proline--tRNA ligase, mitochondrial (Pars2) of Rattus norvegicus (Rat).